The following is a 509-amino-acid chain: DNA primase large subunit (509 aa).

The tract at residues 253-270 (LSHSYTGQDYSTQGNVGK) is interdomain linker. Positions 266 to 509 (GNVGKISLDQ…GLEDYFSEDS (244 aa)) are interacts with PRIM1. Residues Cys287, Cys367, Cys384, and Cys424 each coordinate [4Fe-4S] cluster. The RNA:DNA duplex-binding stretch occupies residues 300–442 (HLRHGGRMQY…NVDDCGFSLN (143 aa)). The interval 461–486 (IKKEPIQPETPQPKPSVQKTKDASSA) is disordered. The residue at position 470 (Thr470) is a Phosphothreonine.

The protein belongs to the eukaryotic-type primase large subunit family. As to quaternary structure, heterodimer of a catalytic subunit PRIM1 and a regulatory subunit PRIM2, also known as the DNA primase complex. Interacts via (C-terminus) with PRIM1. Component of the alpha DNA polymerase complex (also known as the alpha DNA polymerase-primase complex) consisting of four subunits: the catalytic subunit POLA1, the regulatory subunit POLA2, and the primase complex subunits PRIM1 and PRIM2 respectively. Within the complex, POLA1 directly interacts with PRIM2. The cofactor is [4Fe-4S] cluster.

In terms of biological role, regulatory subunit of the DNA primase complex and component of the DNA polymerase alpha complex (also known as the alpha DNA polymerase-primase complex) which play an essential role in the initiation of DNA synthesis. During the S phase of the cell cycle, the DNA polymerase alpha complex (composed of a catalytic subunit POLA1, an accessory subunit POLA2 and two primase subunits, the catalytic subunit PRIM1 and the regulatory subunit PRIM2) is recruited to DNA at the replicative forks via direct interactions with MCM10 and WDHD1. The primase subunit of the polymerase alpha complex initiates DNA synthesis by oligomerising short RNA primers on both leading and lagging strands. These primers are initially extended by the polymerase alpha catalytic subunit and subsequently transferred to polymerase delta and polymerase epsilon for processive synthesis on the lagging and leading strand, respectively. In the primase complex, both subunits are necessary for the initial di-nucleotide formation, but the extension of the primer depends only on the catalytic subunit. Binds RNA:DNA duplex and coordinates the catalytic activities of PRIM1 and POLA2 during primase-to-polymerase switch. The chain is DNA primase large subunit (PRIM2) from Homo sapiens (Human).